A 732-amino-acid chain; its full sequence is Elongation factor 2 (732 aa).

The tr-type G domain maps to 19–260 (ERIRNIDIAA…MVIKNLPNPR (242 aa)). GTP contacts are provided by residues 28-35 (AHIDHGKT), 94-98 (DTPGH), and 148-151 (NKVD). Position 598 is a diphthamide (His-598).

It belongs to the TRAFAC class translation factor GTPase superfamily. Classic translation factor GTPase family. EF-G/EF-2 subfamily.

The protein resides in the cytoplasm. In terms of biological role, catalyzes the GTP-dependent ribosomal translocation step during translation elongation. During this step, the ribosome changes from the pre-translocational (PRE) to the post-translocational (POST) state as the newly formed A-site-bound peptidyl-tRNA and P-site-bound deacylated tRNA move to the P and E sites, respectively. Catalyzes the coordinated movement of the two tRNA molecules, the mRNA and conformational changes in the ribosome. The polypeptide is Elongation factor 2 (Picrophilus torridus (strain ATCC 700027 / DSM 9790 / JCM 10055 / NBRC 100828 / KAW 2/3)).